The following is a 499-amino-acid chain: Aspartyl/glutamyl-tRNA(Asn/Gln) amidotransferase subunit B (499 aa).

Belongs to the GatB/GatE family. GatB subfamily. Heterotrimer of A, B and C subunits.

The catalysed reaction is L-glutamyl-tRNA(Gln) + L-glutamine + ATP + H2O = L-glutaminyl-tRNA(Gln) + L-glutamate + ADP + phosphate + H(+). It catalyses the reaction L-aspartyl-tRNA(Asn) + L-glutamine + ATP + H2O = L-asparaginyl-tRNA(Asn) + L-glutamate + ADP + phosphate + 2 H(+). Functionally, allows the formation of correctly charged Asn-tRNA(Asn) or Gln-tRNA(Gln) through the transamidation of misacylated Asp-tRNA(Asn) or Glu-tRNA(Gln) in organisms which lack either or both of asparaginyl-tRNA or glutaminyl-tRNA synthetases. The reaction takes place in the presence of glutamine and ATP through an activated phospho-Asp-tRNA(Asn) or phospho-Glu-tRNA(Gln). In Bartonella bacilliformis (strain ATCC 35685 / KC583 / Herrer 020/F12,63), this protein is Aspartyl/glutamyl-tRNA(Asn/Gln) amidotransferase subunit B.